The sequence spans 358 residues: Ribosomal RNA large subunit methyltransferase M (358 aa).

Residues Ser-183, 216-219 (APGG), Asp-235, Asp-255, and Asp-271 contribute to the S-adenosyl-L-methionine site. Residue Lys-300 is the Proton acceptor of the active site.

The protein belongs to the class I-like SAM-binding methyltransferase superfamily. RNA methyltransferase RlmE family. RlmM subfamily. Monomer.

It is found in the cytoplasm. It carries out the reaction cytidine(2498) in 23S rRNA + S-adenosyl-L-methionine = 2'-O-methylcytidine(2498) in 23S rRNA + S-adenosyl-L-homocysteine + H(+). Catalyzes the 2'-O-methylation at nucleotide C2498 in 23S rRNA. The protein is Ribosomal RNA large subunit methyltransferase M of Pseudomonas fluorescens (strain SBW25).